A 194-amino-acid chain; its full sequence is Large ribosomal subunit protein eL15 (194 aa).

Residues 164–194 (SAGKKGRGLRNKGKGAEKVRPSVRANKGKTK) are disordered. Residues 167 to 176 (KKGRGLRNKG) are compositionally biased toward basic residues.

This sequence belongs to the eukaryotic ribosomal protein eL15 family.

This is Large ribosomal subunit protein eL15 from Thermococcus gammatolerans (strain DSM 15229 / JCM 11827 / EJ3).